The primary structure comprises 473 residues: Peptidoglycan DL-endopeptidase CwlO (473 aa).

A signal peptide spans 1-30; sequence MRKSLITLGLASVIGTSSFLIPFTSKTASA. Disordered regions lie at residues 31–52, 79–98, and 237–337; these read ETLD…SSIE, ALDT…KTKE, and EASE…GTVI. The segment covering 33-44 has biased composition (basic and acidic residues); sequence LDEKKQKIESKQ. Polar residues predominate over residues 241–250; that stretch reads LANQKANTEA. 2 stretches are compositionally biased toward basic and acidic residues: residues 251–260 and 267–277; these read EQARIKKEQE and KKQEEAQKASD. A compositionally biased stretch (low complexity) spans 291-337; sequence SSKASSSDDSSDNSSDNSSNGSSNSSSNGSSSKKSSGSNSNSGGTVI. Residues 340–471 enclose the NlpC/P60 domain; that stretch reads SGGIEGAISV…AAFKGVVRRV (132 aa). The active-site Nucleophile is cysteine 377. The active-site Proton acceptor is the histidine 431. The active site involves asparagine 443.

The protein belongs to the peptidase C40 family. Identified in the extracellular proteome as a number of processing products of about 50 and 30 kDa.

Its subcellular location is the secreted. It localises to the cell wall. Its activity is regulated as follows. Detected in exponentially growing cells, the 50 and 30 kDa processing products disappear upon entry into stationary phase with the concomitant appearance of a 20 kDa products. The 50 kDa form persists in the absence of extracellular proteases. In terms of biological role, the C-terminal part of CwlO shows a cell wall hydrolytic DL-endopeptidase activity. This is Peptidoglycan DL-endopeptidase CwlO (cwlO) from Bacillus subtilis (strain 168).